The chain runs to 78 residues: Large ribosomal subunit protein bL28 (78 aa).

Belongs to the bacterial ribosomal protein bL28 family.

The protein is Large ribosomal subunit protein bL28 of Pectobacterium atrosepticum (strain SCRI 1043 / ATCC BAA-672) (Erwinia carotovora subsp. atroseptica).